The primary structure comprises 285 residues: Elongation factor Ts (285 aa).

The interval 82–85 (TDFV) is involved in Mg(2+) ion dislocation from EF-Tu.

The protein belongs to the EF-Ts family.

It localises to the cytoplasm. Associates with the EF-Tu.GDP complex and induces the exchange of GDP to GTP. It remains bound to the aminoacyl-tRNA.EF-Tu.GTP complex up to the GTP hydrolysis stage on the ribosome. This Sodalis glossinidius (strain morsitans) protein is Elongation factor Ts.